A 234-amino-acid polypeptide reads, in one-letter code: Putative ankyrin repeat protein RF_0063 (234 aa).

2 ANK repeats span residues 149–180 (NNNT…TISI) and 184–213 (YNNT…QKAL).

This Rickettsia felis (strain ATCC VR-1525 / URRWXCal2) (Rickettsia azadi) protein is Putative ankyrin repeat protein RF_0063.